The primary structure comprises 261 residues: Phosphate import ATP-binding protein PstB 4 (261 aa).

Positions I8–V256 constitute an ABC transporter domain. G40–S47 lines the ATP pocket.

Belongs to the ABC transporter superfamily. Phosphate importer (TC 3.A.1.7) family. As to quaternary structure, the complex is composed of two ATP-binding proteins (PstB), two transmembrane proteins (PstC and PstA) and a solute-binding protein (PstS).

It localises to the cell inner membrane. It catalyses the reaction phosphate(out) + ATP + H2O = ADP + 2 phosphate(in) + H(+). Its function is as follows. Part of the ABC transporter complex PstSACB involved in phosphate import. Responsible for energy coupling to the transport system. The chain is Phosphate import ATP-binding protein PstB 4 from Trichormus variabilis (strain ATCC 29413 / PCC 7937) (Anabaena variabilis).